The chain runs to 993 residues: UPF0182 protein MAP_3291c (993 aa).

The next 7 helical transmembrane spans lie at 18–38, 63–83, 113–133, 175–195, 210–230, 254–274, and 287–307; these read ILIL…RLID, FVVF…GLAV, LVSV…AQSY, FVAV…FGGI, IQLV…YWLD, AVLP…AAVF, and IGLV…PLIV. Residues 903–941 form a disordered region; the sequence is NIQPTEGGAPAASPPANAPAPAVTPGSAPPVAAPPVPDG. The span at 929–939 shows a compositional bias: pro residues; it reads SAPPVAAPPVP.

Belongs to the UPF0182 family.

It localises to the cell membrane. The polypeptide is UPF0182 protein MAP_3291c (Mycolicibacterium paratuberculosis (strain ATCC BAA-968 / K-10) (Mycobacterium paratuberculosis)).